A 460-amino-acid polypeptide reads, in one-letter code: Cysteine--tRNA ligase (460 aa).

A Zn(2+)-binding site is contributed by Cys27. Residues 29–39 carry the 'HIGH' region motif; that stretch reads PTVYDDAHLGH. Residues Cys202, His227, and Glu231 each coordinate Zn(2+). Residues 259–263 carry the 'KMSKS' region motif; the sequence is KMSKS. Lys262 contacts ATP.

Belongs to the class-I aminoacyl-tRNA synthetase family. In terms of assembly, monomer. Zn(2+) is required as a cofactor.

The protein resides in the cytoplasm. It carries out the reaction tRNA(Cys) + L-cysteine + ATP = L-cysteinyl-tRNA(Cys) + AMP + diphosphate. The chain is Cysteine--tRNA ligase from Campylobacter lari (strain RM2100 / D67 / ATCC BAA-1060).